The chain runs to 157 residues: Small ribosomal subunit protein uS7 (157 aa).

The protein belongs to the universal ribosomal protein uS7 family. As to quaternary structure, part of the 30S ribosomal subunit. Contacts proteins S9 and S11.

Functionally, one of the primary rRNA binding proteins, it binds directly to 16S rRNA where it nucleates assembly of the head domain of the 30S subunit. Is located at the subunit interface close to the decoding center, probably blocks exit of the E-site tRNA. In Hydrogenovibrio crunogenus (strain DSM 25203 / XCL-2) (Thiomicrospira crunogena), this protein is Small ribosomal subunit protein uS7.